Here is a 191-residue protein sequence, read N- to C-terminus: Potassium-transporting ATPase KdpC subunit (191 aa).

The chain crosses the membrane as a helical span at residues 7–27 (ASLVLFLSLTLLTGVAYPLLV).

Belongs to the KdpC family. The system is composed of three essential subunits: KdpA, KdpB and KdpC.

Its subcellular location is the cell inner membrane. Its function is as follows. Part of the high-affinity ATP-driven potassium transport (or Kdp) system, which catalyzes the hydrolysis of ATP coupled with the electrogenic transport of potassium into the cytoplasm. This subunit acts as a catalytic chaperone that increases the ATP-binding affinity of the ATP-hydrolyzing subunit KdpB by the formation of a transient KdpB/KdpC/ATP ternary complex. The protein is Potassium-transporting ATPase KdpC subunit of Methylibium petroleiphilum (strain ATCC BAA-1232 / LMG 22953 / PM1).